Consider the following 72-residue polypeptide: uncharacterized protein (72 aa).

A helical transmembrane segment spans residues Val33 to Gly53.

The protein resides in the membrane. This is an uncharacterized protein from Dictyostelium discoideum (Social amoeba).